The sequence spans 364 residues: DNA replication and repair protein RecF (364 aa).

An ATP-binding site is contributed by 30-37; it reads GENAQGKT.

This sequence belongs to the RecF family.

It localises to the cytoplasm. In terms of biological role, the RecF protein is involved in DNA metabolism; it is required for DNA replication and normal SOS inducibility. RecF binds preferentially to single-stranded, linear DNA. It also seems to bind ATP. The polypeptide is DNA replication and repair protein RecF (Streptococcus suis (strain 98HAH33)).